We begin with the raw amino-acid sequence, 528 residues long: Ulvan lyase, short isoform (528 aa).

The N-terminal stretch at 1 to 29 (MKINLSMRELVSRLSTTLKTAIALSVLTA) is a signal peptide. Cys-30 carries N-palmitoyl cysteine lipidation. Residue Cys-30 is the site of S-diacylglycerol cysteine attachment. Residue 151–152 (SH) coordinates substrate. The active-site Proton donor/acceptor is His-152. Residues Asp-218, Asp-228, and Lys-230 each coordinate Ca(2+). Tyr-309 and Arg-326 together coordinate substrate. Asn-329, Asp-332, and Phe-334 together coordinate Ca(2+). His-390 is a binding site for substrate.

This sequence belongs to the polysaccharide lyase 24 family.

Its subcellular location is the secreted. It localises to the cell membrane. Its function is as follows. Ulvan lyase involved in ulvan degradation. Ulvan is the main polysaccharide component of the Ulvales (green seaweed) cell wall. It is composed of disaccharide building blocks comprising 3-sulfated rhamnose (Rha3S) linked to D-glucuronic acid (GlcA), L-iduronic acid (IduA), or D-xylose (Xyl). Ulvan lyase catalyzes preferentially the endolytic cleavage of the glycosidic bond between Rha3S and the uronic acid GlcA, but not IduA, producing oligosaccharides that have unsaturated 4-deoxy-L-threo-hex-4-enopyranosiduronic acid (deltaUA) at the non-reducing end. The most abundant end products in the degradation of the ulvan polysaccharide were deltaUA-Rha3S disaccharides and deltaUA-Rha3S-IduA-Rha3S and deltaUA-Rha3S-Xyl-Rha3S tetrasaccharides. This is Ulvan lyase, short isoform from Alteromonas sp. (strain LOR).